A 248-amino-acid polypeptide reads, in one-letter code: MASRWQNMGTSVRRRSLQHQEQLEDSKELQPVVSHQETSVGALGSLCRQFQRRLPLRAVNLNLRAGPSWKRLETPEPGQQGLQAAARSAKSALGAVSQRIQESCQSGTKWLVETQVKARRRKRGAQKGSGSPTHSLSQKSTRLSGAAPAHSAADPWEKEHHRLSVRMGSHAHPLRRSRREAAFRSPYSSTEPLCSPSESDSDLEPVGAGIQHLQKLSQELDEAIMAEERKQALSDRQGFILKDVYASP.

A compositionally biased stretch (polar residues) spans 1-10 (MASRWQNMGT). The interval 1–32 (MASRWQNMGTSVRRRSLQHQEQLEDSKELQPV) is disordered. Ser-11 and Ser-16 each carry phosphoserine. Short sequence motifs (D-box) lie at residues 14–17 (RRSL) and 53–56 (RLPL). Residues 117–205 (KARRRKRGAQ…PSESDSDLEP (89 aa)) form a disordered region. Ser-129 bears the Phosphoserine mark. Ser-131 bears the Phosphoserine; by UHMK1; in vitro mark. Polar residues-rich tracts occupy residues 132 to 143 (PTHSLSQKSTRL) and 186 to 198 (PYSSTEPLCSPSE). Ser-199 and Ser-201 each carry phosphoserine.

Isoform 1 and isoform 2 interact with PICALM; this interaction may target PICALM to the nucleus. During mitosis, associates with HDAC2 and MTA2 subunits of the chromatin-remodeling NuRD complex; this association is strongest at prometaphase and decreases as the cell progresses through metaphase and anaphase. Ubiquitinated by the anaphase-promoting complex/cyclosome (APC/C) complex in the presence of FZR1, leading to its degradation by the proteasome during mitotic exit. However, degradation is not essential for normal mitotic progression within a single cell cycle. In terms of tissue distribution, expressed in thymus (at protein level). Detected in spleen, colon, ovary and small intestines.

The protein resides in the nucleus. It localises to the nucleolus. Its function is as follows. During mitosis, may play a role in the control of metaphase-to-anaphase transition. This chain is Protein PIMREG, found in Homo sapiens (Human).